The following is a 310-amino-acid chain: uncharacterized protein (310 aa).

This is an uncharacterized protein from Archaeoglobus fulgidus (strain ATCC 49558 / DSM 4304 / JCM 9628 / NBRC 100126 / VC-16).